Reading from the N-terminus, the 1938-residue chain is Myosin-13 (1938 aa).

In terms of domain architecture, Myosin N-terminal SH3-like spans 33–82 (DSKKACFVADNKEMYVKGMIQTRENDKVIVKTLDDRMLTLNNDQVFPMNP). One can recognise a Myosin motor domain in the interval 86–782 (DKIEDMAMMT…LLGLLEEMRD (697 aa)). N6,N6,N6-trimethyllysine is present on Lys130. Residue 179-186 (GESGAGKT) coordinates ATP. 2 actin-binding regions span residues 659 to 681 (LNKL…IPNE) and 761 to 775 (RFGN…GLLG). An IQ domain is found at 785-814 (LVTLMTSTQAVCRGYLMRVEFKKMMERRDS). The stretch at 843 to 1938 (LLKSAEAEKE…RDVGSQKMEE (1096 aa)) forms a coiled coil. Residues 1917 to 1938 (AESQVNKLRAKSRDVGSQKMEE) are disordered. Positions 1927-1938 (KSRDVGSQKMEE) are enriched in basic and acidic residues.

The protein belongs to the TRAFAC class myosin-kinesin ATPase superfamily. Myosin family. Muscle myosin is a hexameric protein that consists of 2 heavy chain subunits (MHC), 2 alkali light chain subunits (MLC) and 2 regulatory light chain subunits (MLC-2). As to expression, specifically expressed in extraocular and laryngeal muscles.

The protein localises to the cytoplasm. It localises to the myofibril. Its function is as follows. Fast twitching myosin mediating the high-velocity and low-tension contractions of specific striated muscles. This chain is Myosin-13 (MYH13), found in Homo sapiens (Human).